Consider the following 79-residue polypeptide: Conotoxin PnMSGL-03 (79 aa).

A signal peptide spans M1 to S20. A propeptide spanning residues H21–I44 is cleaved from the precursor. 3 disulfide bridges follow: C52–C64, C56–C73, and C63–C77. Leucine amide is present on L78.

This sequence belongs to the conotoxin O3 superfamily. As to expression, expressed by the venom duct.

Its subcellular location is the secreted. The sequence is that of Conotoxin PnMSGL-03 from Conus pennaceus (Feathered cone).